We begin with the raw amino-acid sequence, 322 residues long: Short chain dehydrogenase AOL_s00215g274 (322 aa).

NAD(+) is bound by residues 47-48, 104-106, 197-201, and 230-232; these read AV, IAV, YNVSK, and VAT. Residue Y197 is the Proton acceptor of the active site.

Belongs to the short-chain dehydrogenases/reductases (SDR) family.

It participates in secondary metabolite biosynthesis; terpenoid biosynthesis. Functionally, short chain dehydrogenase; part of the gene cluster that mediates the biosynthesis of sesquiterpenyl epoxy-cyclohexenoids (SECs) such as anthrobotrisins and arthrosporols, metabolites that possess a novel hybrid carbon skeleton consisting of a polyketide-derived epoxycyclohexenol combined with a terpenoid-derived monocyclic sesquiterpenol substructure (PKS-PTS hybrid). The SEC pathway plays an important role for fungal soil colonization via decreasing fungal nematode-capturing ability. Within the pathway, the cytochrome P450 monooxygenase AOL_s00215g274 is involved in specific regional ketone reductions at C-4 of farnesyl epoxy-quinone. The pathway begins with the biosynthesis of 6-methylsalicylic acid (6-MSA), the first precursor of the polyketide-derived epoxycyclohexenol in arthrosporols, by the polyketide synthase (PKS) AOL_s00215g283 via condensation of 1 acetate and 3 malonate units. The 6-methylsalicylic acid decarboxylase AOL_s00215g281 then catalyzes the decarboxylation of 6-methylsalicylic acid to yield m-cresol. The cytochrome P450 monooxygenase AOL_s00215g282 further oxidizes m-cresol to yield toluquinol. With the assistance of the oxidoreductase AOL_s00215g277, the polyprenyl transferase AOL_s00215g276 catalyzes the farnesylation of toluquinol to produce farnesyl hydroquinone, the hybrid precursor for biosynthesis of SECs. Farnesyl hydroquinone undergoes epoxidation and then subsequent dehydrogenation to form farnesyl epoxy-quinone, the first and simplest SEC. The cytochrome P450 monooxygenase AOL_s00215g278 and the FAD-dependent monooxygenase AOL_s00215g279 might be involved in the oxygenation of the phenol moiety, most likely in the epoxy formation. The cytochrome P450 monooxygenases AOL_s00215g274 and AOL_s00215g280 are involved in specific regional ketone reductions at respectively C-4 and C-1 of farnesyl epoxy-quinone PubMed:33823587. The sequence is that of Short chain dehydrogenase AOL_s00215g274 from Arthrobotrys oligospora (strain ATCC 24927 / CBS 115.81 / DSM 1491) (Nematode-trapping fungus).